We begin with the raw amino-acid sequence, 250 residues long: PHD finger protein ALFIN-LIKE 3 (250 aa).

Position 1 is an N-acetylmethionine (M1). The interval 146–192 (DKSSAANQNGNKSKSNSKVRTSEGKSSKTKQPKEEDEEIDEDDEDDH) is disordered. Over residues 149 to 163 (SAANQNGNKSKSNSK) the composition is skewed to low complexity. Residues 179 to 192 (EEDEEIDEDDEDDH) show a composition bias toward acidic residues. A PHD-type zinc finger spans residues 194–246 (ETLCGACGDSDGADEFWICCDLCEKWFHGKCVKITPARAEHIKQYKCPSCSNK).

The protein belongs to the Alfin family. Ubiquitously expressed.

It is found in the nucleus. In terms of biological role, histone-binding component that specifically recognizes H3 tails trimethylated on 'Lys-4' (H3K4me3), which mark transcription start sites of virtually all active genes. This chain is PHD finger protein ALFIN-LIKE 3 (AL3), found in Arabidopsis thaliana (Mouse-ear cress).